The sequence spans 425 residues: 2-methylserine hydroxymethyltransferase (425 aa).

Residues leucine 126 and 130-132 (GHL) contribute to the (6S)-5,6,7,8-tetrahydrofolate site. Lysine 235 is subject to N6-(pyridoxal phosphate)lysine. Glutamate 251 serves as a coordination point for (6S)-5,6,7,8-tetrahydrofolate.

It belongs to the SHMT family. As to quaternary structure, homodimer. Pyridoxal 5'-phosphate serves as cofactor.

Its subcellular location is the cytoplasm. The catalysed reaction is (6R)-5,10-methylene-5,6,7,8-tetrahydrofolate + D-alanine + H2O = 2-methylserine + (6S)-5,6,7,8-tetrahydrofolate. It functions in the pathway one-carbon metabolism; tetrahydrofolate interconversion. Inhibited by hydroxylamine and sodium borohydride. Functionally, catalyzes the reversible interconversion of alpha-methyl-L-serine to D-alanine with tetrahydrofolate (THF) serving as the one-carbon carrier. Cannot use alpha-methyl-D-serine, L-serine, D-serine or L-alanine. The sequence is that of 2-methylserine hydroxymethyltransferase from Paracoccus sp.